A 995-amino-acid polypeptide reads, in one-letter code: Bifunctional glutamine synthetase adenylyltransferase/adenylyl-removing enzyme (995 aa).

Residues 1-487 form an adenylyl removase region; it reads MNVTKPATQR…LHAKLFYQPL (487 aa). The tract at residues 492-995 is adenylyl transferase; the sequence is APAGLEIAGR…KAVVRKVFGS (504 aa).

Belongs to the GlnE family. Requires Mg(2+) as cofactor.

It carries out the reaction [glutamine synthetase]-O(4)-(5'-adenylyl)-L-tyrosine + phosphate = [glutamine synthetase]-L-tyrosine + ADP. It catalyses the reaction [glutamine synthetase]-L-tyrosine + ATP = [glutamine synthetase]-O(4)-(5'-adenylyl)-L-tyrosine + diphosphate. In terms of biological role, involved in the regulation of glutamine synthetase GlnA, a key enzyme in the process to assimilate ammonia. When cellular nitrogen levels are high, the C-terminal adenylyl transferase (AT) inactivates GlnA by covalent transfer of an adenylyl group from ATP to specific tyrosine residue of GlnA, thus reducing its activity. Conversely, when nitrogen levels are low, the N-terminal adenylyl removase (AR) activates GlnA by removing the adenylyl group by phosphorolysis, increasing its activity. The regulatory region of GlnE binds the signal transduction protein PII (GlnB) which indicates the nitrogen status of the cell. The protein is Bifunctional glutamine synthetase adenylyltransferase/adenylyl-removing enzyme of Mycobacterium marinum (strain ATCC BAA-535 / M).